The sequence spans 78 residues: High temperature lethal protein 1 (78 aa).

Ser2 is subject to N-acetylserine.

As to quaternary structure, interacts directly with RSC8. Component of the two forms of the RSC complex composed of at least either RSC1 or RSC2, and ARP7, ARP9, LDB7, NPL6, RSC3, RSC30, RSC4, RSC58, RSC6, RSC8, RSC9, SFH1, STH1, HTL1 and probably RTT102. The complexes interact with histone and histone variant components of centromeric chromatin. Component of a fungal-specific module (HTL1-LDB7-NPL6-RSC3-RSC30) within the RSC complex.

The protein localises to the nucleus. Its function is as follows. Required for cell cycle progression through G2/M transition at temperatures higher than 33 degrees Celsius. Component of the chromatin structure-remodeling complex (RSC), which is involved in transcription regulation and nucleosome positioning. RSC is responsible for the transfer of a histone octamer from a nucleosome core particle to naked DNA. The reaction requires ATP and involves an activated RSC-nucleosome intermediate. Remodeling reaction also involves DNA translocation, DNA twist and conformational change. As a reconfigurer of centromeric and flanking nucleosomes, RSC complex is required both for proper kinetochore function in chromosome segregation and, via a PKC1-dependent signaling pathway, for organization of the cellular cytoskeleton. When associated with the RSC complex, may act coordinately with PKC1 to regulate G2/M transition. Together with LDB7, NPL6, RSC3, RSC30 components, defines a fungal-specific module within the RSC complex that plays a role in many cellular functions including the maintenance of cell wall integrity. This chain is High temperature lethal protein 1 (HTL1), found in Saccharomyces cerevisiae (strain ATCC 204508 / S288c) (Baker's yeast).